We begin with the raw amino-acid sequence, 313 residues long: Lactamase-like protein nscB (313 aa).

Positions 97, 99, 101, and 102 each coordinate Zn(2+). D101 (proton donor/acceptor) is an active-site residue.

This sequence belongs to the metallo-beta-lactamase superfamily. It depends on Zn(2+) as a cofactor.

It participates in secondary metabolite biosynthesis. In terms of biological role, lactamase-like protein; part of the gene cluster that mediates the biosynthesis of neosartoricin B, a prenylated anthracenone that probably exhibits T-cell antiproliferative activity, suggestive of a physiological role as an immunosuppressive agent. The non-reducing polyketide synthase nscA probably synthesizes and cyclizes the decaketide backbone. The hydrolase nscB then mediates the product release through hydrolysis followed by spontaneous decarboxylation. The prenyltransferase nscD catalyzes the addition of the dimethylallyl group to the aromatic C5. The FAD-dependent monooxygenase nscC is then responsible for the stereospecific hydroxylation at C2. Neosartoricin B can be converted into two additional compounds neosartoricins C and D. Neosartoricin C is a spirocyclic compound that is cyclized through the attack of C3 hydroxyl on C14, followed by dehydration. On the other hand, neosartoricin D is a further cyclized compound in which attack of C2 on C14 in neosartoricin C results in the formation of the acetal-containing dioxabicyclo-octanone ring. Both of these compounds are novel and possibly represent related metabolites of the gene cluster. This Arthroderma gypseum (strain ATCC MYA-4604 / CBS 118893) (Microsporum gypseum) protein is Lactamase-like protein nscB.